The sequence spans 254 residues: MRIDGREKDQLRTVKITTNYIKHAEGSVLIEMGDTRVVCTATVEDKVPPFAKGEGKGWITAEYGMLPRSTETRNVREATKGRQSGRTLEIQRLIGRALRGVVDLKALGERTLWIDCDVIQADGGTRTAAITGSFVALALALNKLVEEGILPVIPLKDFVAAVSVGIVDGEEILDLNFEEDSKALVDMNVVMTGSNRFVEVQGTGEEATFSMEELQRLLTLAQKGIRELIELQKQALGDIARRIGMENAADSNSQ.

Residues arginine 86 and 124–126 each bind phosphate; that span reads GTR.

The protein belongs to the RNase PH family. In terms of assembly, homohexameric ring arranged as a trimer of dimers.

The enzyme catalyses tRNA(n+1) + phosphate = tRNA(n) + a ribonucleoside 5'-diphosphate. Functionally, phosphorolytic 3'-5' exoribonuclease that plays an important role in tRNA 3'-end maturation. Removes nucleotide residues following the 3'-CCA terminus of tRNAs; can also add nucleotides to the ends of RNA molecules by using nucleoside diphosphates as substrates, but this may not be physiologically important. Probably plays a role in initiation of 16S rRNA degradation (leading to ribosome degradation) during starvation. The protein is Ribonuclease PH of Carboxydothermus hydrogenoformans (strain ATCC BAA-161 / DSM 6008 / Z-2901).